Consider the following 304-residue polypeptide: Methionyl-tRNA formyltransferase (304 aa).

Residue 110–113 (SLLP) coordinates (6S)-5,6,7,8-tetrahydrofolate.

It belongs to the Fmt family.

The catalysed reaction is L-methionyl-tRNA(fMet) + (6R)-10-formyltetrahydrofolate = N-formyl-L-methionyl-tRNA(fMet) + (6S)-5,6,7,8-tetrahydrofolate + H(+). Functionally, attaches a formyl group to the free amino group of methionyl-tRNA(fMet). The formyl group appears to play a dual role in the initiator identity of N-formylmethionyl-tRNA by promoting its recognition by IF2 and preventing the misappropriation of this tRNA by the elongation apparatus. The chain is Methionyl-tRNA formyltransferase from Sulfurovum sp. (strain NBC37-1).